The chain runs to 310 residues: Mitochondrial citrate transporter E (310 aa).

Solcar repeat units lie at residues 2-95 (STTT…LRQG), 107-199 (QSLG…AKRR), and 208-293 (DGPG…TNKI). A run of 6 helical transmembrane segments spans residues 8-28 (FIAG…FETV), 72-92 (GSAY…YEPL), 114-133 (LAGA…FFLV), 178-198 (AMVR…FAKR), 211-228 (GLHL…CCVM), and 265-286 (IYKG…TLSL).

It belongs to the mitochondrial carrier (TC 2.A.29) family.

The protein localises to the mitochondrion inner membrane. Functionally, mitochondrial transporter that does not mediate citrate export from mitochondria to cytoplasm. Its exact function has still to be determined. This Aspergillus niger (strain ATCC 1015 / CBS 113.46 / FGSC A1144 / LSHB Ac4 / NCTC 3858a / NRRL 328 / USDA 3528.7) protein is Mitochondrial citrate transporter E.